The primary structure comprises 106 residues: Cytochrome c (106 aa).

The heme c site is built by Cys-17, Cys-20, and His-21. The residue at position 75 (Lys-75) is an N6,N6,N6-trimethyllysine. Met-83 contributes to the heme c binding site.

It belongs to the cytochrome c family. In terms of processing, binds 1 heme c group covalently per subunit.

Its subcellular location is the mitochondrion intermembrane space. Electron carrier protein. The oxidized form of the cytochrome c heme group can accept an electron from the heme group of the cytochrome c1 subunit of cytochrome reductase. Cytochrome c then transfers this electron to the cytochrome oxidase complex, the final protein carrier in the mitochondrial electron-transport chain. This chain is Cytochrome c (CYC1), found in Gibberella zeae (strain ATCC MYA-4620 / CBS 123657 / FGSC 9075 / NRRL 31084 / PH-1) (Wheat head blight fungus).